A 113-amino-acid chain; its full sequence is Histone H2B (113 aa).

The interval 1–21 (MPATPAKRAKRVQQEKRHHKK) is disordered. Residues 7 to 21 (KRAKRVQQEKRHHKK) are compositionally biased toward basic residues. Lysine 109 is covalently cross-linked (Glycyl lysine isopeptide (Lys-Gly) (interchain with G-Cter in ubiquitin)).

It belongs to the histone H2B family. As to quaternary structure, the nucleosome is a histone octamer containing two molecules each of H2A, H2B, H3 and H4 assembled in one H3-H4 heterotetramer and two H2A-H2B heterodimers. The octamer wraps approximately 147 bp of DNA. In terms of processing, monoubiquitination of Lys-109 gives a specific tag for epigenetic transcriptional activation and is also prerequisite for histone H3 'Lys-4' and 'Lys-79' methylation.

It localises to the nucleus. The protein localises to the chromosome. Functionally, core component of nucleosome. Nucleosomes wrap and compact DNA into chromatin, limiting DNA accessibility to the cellular machineries which require DNA as a template. Histones thereby play a central role in transcription regulation, DNA repair, DNA replication and chromosomal stability. DNA accessibility is regulated via a complex set of post-translational modifications of histones, also called histone code, and nucleosome remodeling. The polypeptide is Histone H2B (H2B1) (Euplotes crassus).